The primary structure comprises 205 residues: Protein N-terminal glutamine amidohydrolase (205 aa).

Active-site residues include cysteine 20, histidine 74, and aspartate 90.

Belongs to the NTAQ1 family. Monomer.

It catalyses the reaction N-terminal L-glutaminyl-[protein] + H2O = N-terminal L-glutamyl-[protein] + NH4(+). Its function is as follows. Mediates the side-chain deamidation of N-terminal glutamine residues to glutamate, an important step in N-end rule pathway of protein degradation. Conversion of the resulting N-terminal glutamine to glutamate renders the protein susceptible to arginylation, polyubiquitination and degradation as specified by the N-end rule. Does not act on substrates with internal or C-terminal glutamine and does not act on non-glutamine residues in any position. This Drosophila willistoni (Fruit fly) protein is Protein N-terminal glutamine amidohydrolase (tun).